The primary structure comprises 332 residues: MNPLIFKENRPFDLIAVGRLCVDLNANETQRPMEETRTFTKYVGGSPANIAIGAARLGLQTGFIGKVSDDQMGRFITGYLKDNKINTDQIPIDCTGAVTGLAFTEIKSPEDCSILMYRDNVADLNLDPTEVSEDYIKQSKALLISGTALAKSPSREAVFLALEYARKHDVVVFFDVDYRPYTWQSEAETAVYYNLAAEKSDVIIGTREEFDMMEKLLNYEKSNDQVTAERWFSHHAKIVVIKHGGDGSIAYTRDGQSHRGGIFKTKVLKTFGAGDSYASAFIYGLMQGLEIPQAMRLGGASASIVISKHSCSDAMPTRAEISAFMETAEELV.

Belongs to the carbohydrate kinase PfkB family.

The catalysed reaction is 5-dehydro-2-deoxy-D-gluconate + ATP = 6-phospho-5-dehydro-2-deoxy-D-gluconate + ADP + H(+). It functions in the pathway polyol metabolism; myo-inositol degradation into acetyl-CoA; acetyl-CoA from myo-inositol: step 5/7. Catalyzes the phosphorylation of 5-dehydro-2-deoxy-D-gluconate (2-deoxy-5-keto-D-gluconate or DKG) to 6-phospho-5-dehydro-2-deoxy-D-gluconate (DKGP). The polypeptide is 5-dehydro-2-deoxygluconokinase (Bacillus anthracis (strain A0248)).